The sequence spans 206 residues: LexA repressor (206 aa).

The H-T-H motif DNA-binding region spans 28–48 (VREICAAVGLSSTSTVHGHLT). Residues Ser-127 and Lys-165 each act as for autocatalytic cleavage activity in the active site.

This sequence belongs to the peptidase S24 family. As to quaternary structure, homodimer.

The enzyme catalyses Hydrolysis of Ala-|-Gly bond in repressor LexA.. Represses a number of genes involved in the response to DNA damage (SOS response), including recA and lexA. In the presence of single-stranded DNA, RecA interacts with LexA causing an autocatalytic cleavage which disrupts the DNA-binding part of LexA, leading to derepression of the SOS regulon and eventually DNA repair. This chain is LexA repressor, found in Lactobacillus delbrueckii subsp. bulgaricus (strain ATCC 11842 / DSM 20081 / BCRC 10696 / JCM 1002 / NBRC 13953 / NCIMB 11778 / NCTC 12712 / WDCM 00102 / Lb 14).